Consider the following 180-residue polypeptide: Minor allergen Can f 2 (180 aa).

The signal sequence occupies residues 1 to 18 (MQLLLLTVGLALICGLQA). N-linked (GlcNAc...) asparagine glycosylation occurs at Asn-45. An intrachain disulfide couples Cys-82 to Cys-175.

This sequence belongs to the calycin superfamily. Lipocalin family. Tongue epithelial tissue and parotid gland.

The protein resides in the secreted. The sequence is that of Minor allergen Can f 2 from Canis lupus familiaris (Dog).